A 384-amino-acid polypeptide reads, in one-letter code: Chaperone protein DnaJ (384 aa).

In terms of domain architecture, J spans 5 to 70 (DYYEVLGVAR…QKKAAYDRFG (66 aa)). The CR-type zinc-finger motif lies at 138 to 216 (GAQKTINVPG…CRGAGRVQKE (79 aa)). Residues Cys-151, Cys-154, Cys-168, Cys-171, Cys-190, Cys-193, Cys-204, and Cys-207 each coordinate Zn(2+). 4 CXXCXGXG motif repeats span residues 151–158 (CAACNGTG), 168–175 (CPTCSGMG), 190–197 (CPTCSGHG), and 204–211 (CQECRGAG). The segment at 300–322 (KVPPGTQSGKQLRLRGKGMPPLR) is disordered.

It belongs to the DnaJ family. As to quaternary structure, homodimer. The cofactor is Zn(2+).

Its subcellular location is the cytoplasm. Its function is as follows. Participates actively in the response to hyperosmotic and heat shock by preventing the aggregation of stress-denatured proteins and by disaggregating proteins, also in an autonomous, DnaK-independent fashion. Unfolded proteins bind initially to DnaJ; upon interaction with the DnaJ-bound protein, DnaK hydrolyzes its bound ATP, resulting in the formation of a stable complex. GrpE releases ADP from DnaK; ATP binding to DnaK triggers the release of the substrate protein, thus completing the reaction cycle. Several rounds of ATP-dependent interactions between DnaJ, DnaK and GrpE are required for fully efficient folding. Also involved, together with DnaK and GrpE, in the DNA replication of plasmids through activation of initiation proteins. This chain is Chaperone protein DnaJ, found in Paracoccus denitrificans (strain Pd 1222).